Here is a 929-residue protein sequence, read N- to C-terminus: Bifunctional glutamine synthetase adenylyltransferase/adenylyl-removing enzyme (929 aa).

The interval 1–423 is adenylyl removase; it reads MSTPIDSSRA…RHFEQIFAAR (423 aa). The tract at residues 433-929 is adenylyl transferase; that stretch reads ARIRPEQSGD…FQLWEDIFGT (497 aa).

Belongs to the GlnE family. Mg(2+) is required as a cofactor.

It catalyses the reaction [glutamine synthetase]-O(4)-(5'-adenylyl)-L-tyrosine + phosphate = [glutamine synthetase]-L-tyrosine + ADP. It carries out the reaction [glutamine synthetase]-L-tyrosine + ATP = [glutamine synthetase]-O(4)-(5'-adenylyl)-L-tyrosine + diphosphate. Involved in the regulation of glutamine synthetase GlnA, a key enzyme in the process to assimilate ammonia. When cellular nitrogen levels are high, the C-terminal adenylyl transferase (AT) inactivates GlnA by covalent transfer of an adenylyl group from ATP to specific tyrosine residue of GlnA, thus reducing its activity. Conversely, when nitrogen levels are low, the N-terminal adenylyl removase (AR) activates GlnA by removing the adenylyl group by phosphorolysis, increasing its activity. The regulatory region of GlnE binds the signal transduction protein PII (GlnB) which indicates the nitrogen status of the cell. The chain is Bifunctional glutamine synthetase adenylyltransferase/adenylyl-removing enzyme from Nitrosomonas europaea (strain ATCC 19718 / CIP 103999 / KCTC 2705 / NBRC 14298).